The sequence spans 835 residues: MKVLALRHSVAQVYADTQVYVHDDTKDSYENAFLISNLTTHNILYLNYSIKTLEILNKSGIAAIALQSLEELFTLIRCNFTYDYELDIIYLHDYSYYTNNEIRTDQHWITKTNIEEYLLPGWKLTYVGYNGSETRGHYNFSFKCQNAATDDDLIIEYIYSEALDFQNFMLKKIKERMTTSLPIARLSNRVFRDKLFPSLLKEHKNVVNVGPRNESMFTFLNYPTIKQFSNGAYLVKDTIKLKQERWLGKRISQFDIGQYKNMLNVLTAIYYYYNLYKSKPIIYMIGSAPSYWIYDVRHYSDFFFETWDPLDTPYSSIHHKELFFINDVKKLKDNSILYIDIRTDRGNADWKKWRKTVEEQTINNLDIAYEYLRTGKAKVCCVKMTAMDLELPISAKLLHHPTTEIRSEFYLLLDTWDLTNIRRFIPKGVLYSFINNIITENVFIQQPFKVKVLNDSYIVALYALSNDFNNRSEVIKLINNQKQSLITVRINNTFKDEPKVGFKNIYDWTFLPTDFDTKEAIITSYDGCLGLFGLSISLASKPTGNNHLFILSGTDKYYKLDQFANHTSISRRSHQIRFSESATSYSGYIFRDLSNNNFNLIGTNIENSVSGHVYNALIYYRYNYSFDLKRWIYLHSIDKVDIEGGKYYELAPIELIYACRSAKEFATLQDDLTVLRYSNEIENYINTVYSITYADDPNYFIGIQFRNIPYKYDVKIPHLTFGVLHISDNMVPDVIDILKIMKNELFKMDITTSYTYMLSDGIYVANVSGVLSTYFKIYNVFYKNQITFGQSRMFIPHITLSFNNMRTVRIETTKLQIKSIYLRKIKGDTVFDMVE.

The N7-methyltransferase activity stretch occupies residues Lys-171–Arg-245. The interval Trp-246–Gly-428 is 2'-O-methyltransferase activity. An N7-methyltransferase activity region spans residues Val-429–Asp-555. The segment at Lys-556 to Tyr-693 is GTase/RTPase activity. The 2'-5'-phosphodiesterase activity stretch occupies residues Tyr-693 to Glu-835. Catalysis depends on for 2'-5'-phosphodiesterase activity residues His-718, Thr-720, His-797, and Thr-799.

Belongs to the rotavirus VP3 family. As to quaternary structure, interacts with VP1. Interacts with VP2.

It localises to the virion. The enzyme catalyses a 5'-end diphospho-ribonucleoside in mRNA + GTP + H(+) = a 5'-end (5'-triphosphoguanosine)-ribonucleoside in mRNA + diphosphate. The catalysed reaction is a 5'-end (5'-triphosphoguanosine)-ribonucleoside in mRNA + S-adenosyl-L-methionine = a 5'-end (N(7)-methyl 5'-triphosphoguanosine)-ribonucleoside in mRNA + S-adenosyl-L-homocysteine. It catalyses the reaction 5'-triphosphoadenylyl-(2'-&gt;5')-adenylyl-(2'-&gt;5')-adenosine + 2 H2O = 2 AMP + ATP + 2 H(+). Multifunctional enzyme involved in mRNA capping. Catalyzes the formation of the 5' cap structure on the viral plus-strand transcripts. Specifically binds to GTP and displays guanylyltransferase and methyltransferase activities. Has affinity for ssRNA but not for dsRNA. Capping activity is non-specific and caps RNAs that initiate with either a G or an A residue. Together with VP1 polymerase, forms a VP1-VP3 complex positioned near the channels situated at each of the five-fold vertices of the core. Following infection, the outermost layer of the virus is lost, leaving a double-layered particle (DLP) made up of the core and VP6 shell. VP1 then catalyzes the transcription of fully conservative plus-strand genomic RNAs that are capped by VP3 and extruded through the DLP's channels into the cytoplasm where they function as mRNAs for translation of viral proteins. DLPs probably have an RNA triphosphatase activity as well, whereas open cores do not. Functionally, counteracts the host innate immune response thanks to its phosphodiesterase that degrades the 5'-triphosphorylated, 2'-5' linked adenylate oligomers produced by the host cell IFN-inducible 2',5'-oligoadenylate synthetase (OAS). The host RNaseL is therefore not activated. This is Protein VP3 from Chlorocebus pygerythrus (Vervet monkey).